The chain runs to 303 residues: Shikimate kinase 1, chloroplastic (303 aa).

Residues 1–66 (MEAAITQRIQ…QRRAVSPAVS (66 aa)) constitute a chloroplast transit peptide. 109 to 116 (GMMGSGKT) is an ATP binding site. Residue threonine 116 participates in Mg(2+) binding. Positions 134, 159, and 181 each coordinate substrate. Arginine 220 is a binding site for ATP.

This sequence belongs to the shikimate kinase family. As to quaternary structure, homodimer. It depends on Mg(2+) as a cofactor.

The protein localises to the plastid. Its subcellular location is the chloroplast. It carries out the reaction shikimate + ATP = 3-phosphoshikimate + ADP + H(+). It participates in metabolic intermediate biosynthesis; chorismate biosynthesis; chorismate from D-erythrose 4-phosphate and phosphoenolpyruvate: step 5/7. Catalyzes the specific phosphorylation of the 3-hydroxyl group of shikimic acid using ATP as a cosubstrate. The sequence is that of Shikimate kinase 1, chloroplastic (SK1) from Arabidopsis thaliana (Mouse-ear cress).